A 315-amino-acid chain; its full sequence is Methionyl-tRNA formyltransferase (315 aa).

(6S)-5,6,7,8-tetrahydrofolate is bound at residue 114–117 (SLLP).

The protein belongs to the Fmt family.

It carries out the reaction L-methionyl-tRNA(fMet) + (6R)-10-formyltetrahydrofolate = N-formyl-L-methionyl-tRNA(fMet) + (6S)-5,6,7,8-tetrahydrofolate + H(+). In terms of biological role, attaches a formyl group to the free amino group of methionyl-tRNA(fMet). The formyl group appears to play a dual role in the initiator identity of N-formylmethionyl-tRNA by promoting its recognition by IF2 and preventing the misappropriation of this tRNA by the elongation apparatus. The protein is Methionyl-tRNA formyltransferase of Corynebacterium efficiens (strain DSM 44549 / YS-314 / AJ 12310 / JCM 11189 / NBRC 100395).